The chain runs to 116 residues: Protein Wnt-5b (116 aa).

Residue serine 1 is the site of O-palmitoleoyl serine; by PORCN attachment. N-linked (GlcNAc...) asparagine glycosylation is found at asparagine 69 and asparagine 83. A disulfide bridge connects residues cysteine 82 and cysteine 97.

Belongs to the Wnt family. Post-translationally, palmitoleoylation is required for efficient binding to frizzled receptors. Depalmitoleoylation leads to Wnt signaling pathway inhibition.

The protein resides in the secreted. The protein localises to the extracellular space. It localises to the extracellular matrix. Functionally, ligand for members of the frizzled family of seven transmembrane receptors. Probable developmental protein. May be a signaling molecule which affects the development of discrete regions of tissues. Is likely to signal over only few cell diameters. The protein is Protein Wnt-5b (WNT-5B) of Alopias vulpinus (Common thresher shark).